A 736-amino-acid chain; its full sequence is Replication restart protein PriA (736 aa).

The Helicase ATP-binding domain occupies 230 to 396; it reads DFKGNISKEN…KEGRIRTFNF (167 aa). 243–250 is a binding site for ATP; the sequence is GPTGSGKT. The DEAH box motif lies at 339–342; it reads DEEH. The Zn(2+) site is built by Cys-452, Cys-455, Cys-461, Cys-464, Cys-479, Cys-482, Cys-492, and Cys-495. One can recognise a Helicase C-terminal domain in the interval 487 to 643; the sequence is GLVESCPRCG…EELERRKALG (157 aa).

The protein belongs to the helicase family. PriA subfamily. As to quaternary structure, component of the replication restart primosome. It depends on Zn(2+) as a cofactor.

It carries out the reaction Couples ATP hydrolysis with the unwinding of duplex DNA by translocating in the 3'-5' direction.. It catalyses the reaction ATP + H2O = ADP + phosphate + H(+). In terms of biological role, initiates the restart of stalled replication forks, which reloads the replicative helicase on sites other than the origin of replication. Recognizes and binds to abandoned replication forks and remodels them to uncover a helicase loading site. Promotes assembly of the primosome at these replication forks. This chain is Replication restart protein PriA, found in Thermotoga maritima (strain ATCC 43589 / DSM 3109 / JCM 10099 / NBRC 100826 / MSB8).